Consider the following 389-residue polypeptide: Cytochrome f (389 aa).

A signal peptide spans 1–42 (MTTFFISKVNGPVNKSLIWLKIHIYEFFLLKFMLLFPPTVCS). 4 residues coordinate heme: Y105, C125, C128, and H129. The chain crosses the membrane as a helical span at residues 355 to 375 (LQALIVFFIFVILTQLFLVLK).

It belongs to the cytochrome f family. As to quaternary structure, the 4 large subunits of the cytochrome b6-f complex are cytochrome b6, subunit IV (17 kDa polypeptide, petD), cytochrome f and the Rieske protein, while the 4 small subunits are PetG, PetL, PetM and PetN. The complex functions as a dimer. The cofactor is heme.

The protein localises to the plastid. It localises to the chloroplast thylakoid membrane. In terms of biological role, component of the cytochrome b6-f complex, which mediates electron transfer between photosystem II (PSII) and photosystem I (PSI), cyclic electron flow around PSI, and state transitions. This chain is Cytochrome f, found in Pleurastrum terricola (Filamentous green alga).